Consider the following 518-residue polypeptide: G1/S-specific cyclin-E (518 aa).

The segment at 1 to 193 (MAGRKSSRTT…DEETEDEFDL (193 aa)) is disordered. Positions 13–46 (PVKKAERKSAILSPHDELRERLLETSLDVKENIP) are enriched in basic and acidic residues. Over residues 47–62 (ERSSSTRNESVGSQRS) the composition is skewed to polar residues. Residues 82–107 (PSTEKKGNGSRDDSFSSVFSEDRETE) are compositionally biased toward basic and acidic residues. Over residues 108 to 119 (SSVGSTSSRTRG) the composition is skewed to low complexity. Basic and acidic residues predominate over residues 135 to 154 (SSDHNAESEESRETPQSDEH). Residues 155–192 (DGFEEDGDVEDDVSSDVNDEEDEYDEYEEDEETEDEFD) show a composition bias toward acidic residues.

It belongs to the cyclin family. Cyclin E subfamily. Interacts with a member of the CDK2/CDK protein kinases to form a serine/threonine kinase holoenzyme complex. The cyclin subunit imparts substrate specificity to the complex.

The protein localises to the nucleus. Its subcellular location is the cytoplasm. The protein resides in the cytoskeleton. It is found in the microtubule organizing center. It localises to the centrosome. The protein localises to the centriole. In terms of biological role, essential for the control of the cell cycle at the G1/S (start) transition. In association with cdk-2, regulates proliferation, quiescent state and cell fate during the development of several cell lineages. In the embryo, initiates the establishment of cell polarity through the recruitment of the centrosomal proteins spd-2 and spd-5 during prophase. During the development of the vulva, controls the onset of vulval cell terminal differentiation by controlling the duration of G1 phase. During hypoderm development at early larval stages, controls syncytial fate of seam cell daughter cells. Involved in the progression of cell division in the intestinal lineage in larvae, and in particular in endoreplication, a specific growth pathway in the intestinal epithelium, required for feeding and gut development in growing larvae. By controlling the activity of translational repressor gld-1, regulates the pool of germline stem cells and the size of the mitotic zone by preventing entry into meiosis. In addition, repression of expression by gld-1 prevents mitosis re-entry in meiotic germline cells. This is G1/S-specific cyclin-E (cye-1) from Caenorhabditis briggsae.